Reading from the N-terminus, the 179-residue chain is Shikimate kinase (179 aa).

15–20 contributes to the ATP binding site; it reads GAGKTS. Threonine 19 lines the Mg(2+) pocket. Substrate-binding residues include aspartate 37, arginine 61, and glycine 83. Residue arginine 123 participates in ATP binding. Arginine 142 provides a ligand contact to substrate.

The protein belongs to the shikimate kinase family. Monomer. It depends on Mg(2+) as a cofactor.

Its subcellular location is the cytoplasm. The catalysed reaction is shikimate + ATP = 3-phosphoshikimate + ADP + H(+). The protein operates within metabolic intermediate biosynthesis; chorismate biosynthesis; chorismate from D-erythrose 4-phosphate and phosphoenolpyruvate: step 5/7. In terms of biological role, catalyzes the specific phosphorylation of the 3-hydroxyl group of shikimic acid using ATP as a cosubstrate. The polypeptide is Shikimate kinase (Coxiella burnetii (strain CbuG_Q212) (Coxiella burnetii (strain Q212))).